A 190-amino-acid polypeptide reads, in one-letter code: ADP-ribosylation factor-like protein 6 (190 aa).

The N-myristoyl glycine moiety is linked to residue glycine 2. GTP is bound by residues 24–31, threonine 50, 69–73, glycine 72, 130–133, and alanine 164; these read GLDNSGKT, DMAGQ, and NKMD. Threonine 31 and threonine 50 together coordinate Mg(2+).

Belongs to the small GTPase superfamily. Arf family.

It is found in the cytoplasm. This is ADP-ribosylation factor-like protein 6 from Caenorhabditis briggsae.